The primary structure comprises 463 residues: ATP synthase subunit beta (463 aa).

151–158 (GGAGVGKT) is a binding site for ATP.

It belongs to the ATPase alpha/beta chains family. F-type ATPases have 2 components, CF(1) - the catalytic core - and CF(0) - the membrane proton channel. CF(1) has five subunits: alpha(3), beta(3), gamma(1), delta(1), epsilon(1). CF(0) has three main subunits: a(1), b(2) and c(9-12). The alpha and beta chains form an alternating ring which encloses part of the gamma chain. CF(1) is attached to CF(0) by a central stalk formed by the gamma and epsilon chains, while a peripheral stalk is formed by the delta and b chains.

It is found in the cell membrane. The enzyme catalyses ATP + H2O + 4 H(+)(in) = ADP + phosphate + 5 H(+)(out). Its function is as follows. Produces ATP from ADP in the presence of a proton gradient across the membrane. The catalytic sites are hosted primarily by the beta subunits. In Clostridium botulinum (strain Loch Maree / Type A3), this protein is ATP synthase subunit beta.